The primary structure comprises 154 residues: Myoglobin (154 aa).

The Globin domain maps to 1–147; the sequence is MADVKKNCLA…FNDECQHQLA (147 aa). H96 is a binding site for heme b.

It belongs to the globin family.

Its subcellular location is the cytoplasm. This is Myoglobin (GLBB) from Nippostrongylus brasiliensis (Rat hookworm).